Consider the following 310-residue polypeptide: Epoxyqueuosine reductase (310 aa).

Asp133 acts as the Proton donor in catalysis. The 4Fe-4S ferredoxin-type domain maps to 179-208 (YDNPSDKDYCGTCTRCVDACPTDAILQDNL). Residues Cys188, Cys191, Cys194, Cys198, Cys214, Cys241, Cys244, and Cys248 each contribute to the [4Fe-4S] cluster site.

The protein belongs to the QueG family. Monomer. Cob(II)alamin serves as cofactor. [4Fe-4S] cluster is required as a cofactor.

The protein resides in the cytoplasm. It catalyses the reaction epoxyqueuosine(34) in tRNA + AH2 = queuosine(34) in tRNA + A + H2O. Its pathway is tRNA modification; tRNA-queuosine biosynthesis. Catalyzes the conversion of epoxyqueuosine (oQ) to queuosine (Q), which is a hypermodified base found in the wobble positions of tRNA(Asp), tRNA(Asn), tRNA(His) and tRNA(Tyr). This is Epoxyqueuosine reductase from Cyclobacterium marinum (strain ATCC 25205 / DSM 745 / LMG 13164 / NCIMB 1802) (Flectobacillus marinus).